A 175-amino-acid chain; its full sequence is Pancreatic beta cell growth factor (175 aa).

An N-terminal signal peptide occupies residues 1–26 (MMLPMTLCRMSWMLLSCLMFLSWVEG). The C-type lectin domain maps to 38 to 175 (ITCPQGSVAY…ELPYICKFKV (138 aa)). Disulfide bonds link cysteine 40/cysteine 51, cysteine 68/cysteine 171, and cysteine 146/cysteine 163.

As to expression, expressed only in CW animals pancreas and to a lesser extent in duodenum. In pancreas it is found in acinar cells, but not in islets.

Its subcellular location is the secreted. Functionally, constituent of ilotropin, which is a partially purified preparation of cellophane wrapping (CW) pancreata. Capable of initiating duct cell proliferation, a prerequisite for islet neogenesis. This Mesocricetus auratus (Golden hamster) protein is Pancreatic beta cell growth factor (INGAP).